The chain runs to 402 residues: E3 ubiquitin-protein ligase makorin-2 (402 aa).

3 consecutive C3H1-type zinc fingers follow at residues 2–29 (TTKQ…HDPS), 31–58 (SKPS…HVKL), and 141–168 (QDLP…HGDK). A makorin-type Cys-His region spans residues 169–198 (CEVCGLQVLDPHNPEQRSMHEKMCLLAFEA). The RING-type zinc-finger motif lies at 214 to 268 (CSICMEVVVQKMNPSDRRFGILSSCCHVFCLACIRKWRCTRNFSNKIIKSCPECR). The C3H1-type 4 zinc finger occupies 297–326 (GVGKKPCKYFDQGRGSCPFGGKCLYLHALP).

The protein resides in the cytoplasm. It localises to the nucleus. The catalysed reaction is S-ubiquitinyl-[E2 ubiquitin-conjugating enzyme]-L-cysteine + [acceptor protein]-L-lysine = [E2 ubiquitin-conjugating enzyme]-L-cysteine + N(6)-ubiquitinyl-[acceptor protein]-L-lysine.. Its pathway is protein modification; protein ubiquitination. In terms of biological role, E3 ubiquitin ligase catalyzing the covalent attachment of ubiquitin moieties onto substrate proteins. Inhibits neurogenesis and axis formation during embryonic development by modulating the phosphatidylinositol 3-kinase (PI3K) pathway. Acts downstream of PI3K and akt1 to up-regulate gsk3b mRNA expression. This is E3 ubiquitin-protein ligase makorin-2 from Takifugu rubripes (Japanese pufferfish).